The following is a 598-amino-acid chain: IQ calmodulin-binding motif-containing protein 1 (598 aa).

The interval methionine 1–valine 157 is interaction with BBS1, BBS8 and BBS9. Positions glutamine 287–proline 598 are interaction with CEP290, BBS1, BBS2, BBS4, BBS5, BBS7, BBS8 and BBS9. 4 consecutive IQ domains span residues leucine 294–leucine 317, proline 318–glutamate 338, glutamate 387–glutamate 416, and tyrosine 417–lysine 437. A coiled-coil region spans residues methionine 336–leucine 362. Residues alanine 530–proline 598 form an interaction with BBS1, BBS2, BBS4, BBS7, BBS8 and BBS9 region.

In terms of assembly, interacts with calmodulin. Interacts with CEP290/NPHP6; IQCB1/NPHP5 and CEP290/NPHP6; are proposed to form a functional NPHP5-6 module localized to the centrosome. Interacts with ATXN10. Interacts with NPHP1, INVS, NPHP4 and RPGRIP1L; these interactions likely require additional interactors. Associates with the BBSome complex; interacts with BBS1, BBS2, BBS4, BBS5, BBS7, BBS8 and BBS9. Localized to the outer segment and connecting cilia of photoreceptor cells.

Its subcellular location is the cytoplasm. The protein resides in the cytoskeleton. It is found in the microtubule organizing center. The protein localises to the centrosome. Involved in ciliogenesis. The function in an early step in cilia formation depends on its association with CEP290/NPHP6. Involved in regulation of the BBSome complex integrity, specifically for presence of BBS2 and BBS5 in the complex, and in ciliary targeting of selected BBSome cargos. May play a role in controlling entry of the BBSome complex to cilia possibly implicating CEP290/NPHP6. In Mus musculus (Mouse), this protein is IQ calmodulin-binding motif-containing protein 1 (Iqcb1).